The chain runs to 224 residues: Artemin (224 aa).

Residues 1–39 form the signal peptide; sequence MELGLAEPTALSHCLRPRWQSAWWPTLAVLALLSCVTEA. Residues 40-111 constitute a propeptide that is removed on maturation; sequence SLDPMSRSPA…AALRGARAAR (72 aa). Positions 43–124 are disordered; sequence PMSRSPAARD…RSSRARTTDA (82 aa). Over residues 80 to 95 the composition is skewed to pro residues; the sequence is RPPPQSPQPAPPPPGP. Over residues 96–116 the composition is skewed to low complexity; sequence ALQSPPAALRGARAARAGTRS. 3 disulfide bridges follow: Cys127–Cys192, Cys154–Cys220, and Cys158–Cys222. Residue Asn206 is glycosylated (N-linked (GlcNAc...) asparagine).

It belongs to the TGF-beta family. GDNF subfamily. In terms of assembly, homodimer; disulfide-linked. Interacts with GFRA3 coreceptor and RET: forms a 2:2:2 ternary complex composed of ARTN ligand, GFRA3 and RET receptor.

Its subcellular location is the secreted. Its function is as follows. Growth factor that supports the survival of sensory and sympathetic peripheral neurons in culture and also supports the survival of dopaminergic neurons of the ventral mid-brain. Acts by binding to its coreceptor, GFRA3, leading to autophosphorylation and activation of the RET receptor. Strong attractant of gut hematopoietic cells thus promoting the formation Peyer's patch-like structures, a major component of the gut-associated lymphoid tissue. In Mus musculus (Mouse), this protein is Artemin.